Consider the following 64-residue polypeptide: Sulfur carrier protein ThiS (64 aa).

G64 carries the post-translational modification 1-thioglycine; alternate. G64 carries the post-translational modification Glycyl adenylate; alternate. Residue G64 forms a Glycyl cysteine thioester (Gly-Cys) (interchain with C-192 in TtuC); alternate linkage.

It belongs to the sulfur carrier protein ThiS family. Post-translationally, C-terminal thiocarboxylation occurs in 2 steps, it is first acyl-adenylated (-COAMP) by TtuC, then thiocarboxylated (-COSH) by the cysteine desulfurases IscS or SufS.

The protein operates within cofactor biosynthesis; thiamine diphosphate biosynthesis. Functionally, is the sulfur donor in the synthesis of the thiazole phosphate moiety of thiamine phosphate. This Thermus thermophilus (strain ATCC BAA-163 / DSM 7039 / HB27) protein is Sulfur carrier protein ThiS.